The following is a 98-amino-acid chain: NADH-ubiquinone oxidoreductase chain 4L (98 aa).

The next 3 membrane-spanning stretches (helical) occupy residues 1–21, 29–49, and 61–81; these read MPFI…GLLI, SLLC…TMTL, and IILL…LILI.

The protein belongs to the complex I subunit 4L family. Core subunit of respiratory chain NADH dehydrogenase (Complex I) which is composed of 45 different subunits.

Its subcellular location is the mitochondrion inner membrane. The enzyme catalyses a ubiquinone + NADH + 5 H(+)(in) = a ubiquinol + NAD(+) + 4 H(+)(out). Its function is as follows. Core subunit of the mitochondrial membrane respiratory chain NADH dehydrogenase (Complex I) which catalyzes electron transfer from NADH through the respiratory chain, using ubiquinone as an electron acceptor. Part of the enzyme membrane arm which is embedded in the lipid bilayer and involved in proton translocation. The polypeptide is NADH-ubiquinone oxidoreductase chain 4L (MT-ND4L) (Cebus albifrons (White-fronted capuchin)).